The primary structure comprises 442 residues: GTPase Obg (442 aa).

Residues 1-158 (MFYDQARIFV…HWLELELKLL (158 aa)) enclose the Obg domain. The OBG-type G domain occupies 159–329 (ADVGLVGFPN…LIYHVHKGLE (171 aa)). GTP contacts are provided by residues 165 to 172 (GFPNVGKS), 190 to 194 (FTTLE), 212 to 215 (DIPG), 282 to 285 (NKMD), and 310 to 312 (SAA). Mg(2+) is bound by residues Ser172 and Thr192. The 79-residue stretch at 349–427 (FTGKTEERFK…IGDLDFDFIE (79 aa)) folds into the OCT domain.

It belongs to the TRAFAC class OBG-HflX-like GTPase superfamily. OBG GTPase family. As to quaternary structure, monomer. It depends on Mg(2+) as a cofactor.

Its subcellular location is the cytoplasm. In terms of biological role, an essential GTPase which binds GTP, GDP and possibly (p)ppGpp with moderate affinity, with high nucleotide exchange rates and a fairly low GTP hydrolysis rate. Plays a role in control of the cell cycle, stress response, ribosome biogenesis and in those bacteria that undergo differentiation, in morphogenesis control. This is GTPase Obg from Heliobacterium modesticaldum (strain ATCC 51547 / Ice1).